The sequence spans 342 residues: Foldase protein PrsA (342 aa).

The N-terminal stretch at Met-1–Gly-22 is a signal peptide. The N-palmitoyl cysteine moiety is linked to residue Cys-23. Residue Cys-23 is the site of S-diacylglycerol cysteine attachment. The 96-residue stretch at Asp-189–Ala-284 folds into the PpiC domain.

The protein belongs to the PrsA family.

Its subcellular location is the cell membrane. The catalysed reaction is [protein]-peptidylproline (omega=180) = [protein]-peptidylproline (omega=0). Plays a major role in protein secretion by helping the post-translocational extracellular folding of several secreted proteins. The chain is Foldase protein PrsA from Clostridium perfringens (strain 13 / Type A).